The following is a 502-amino-acid chain: UDP-N-acetylglucosamine diphosphorylase 2 (502 aa).

A Substrate binding motif is present at residues 130–133 (LSGG). Residue N250 coordinates substrate. Residues 332 to 333 (EY) carry the Substrate binding motif. K429 contacts substrate.

The protein belongs to the UDPGP type 1 family. In terms of assembly, monomer. Mg(2+) is required as a cofactor. Mn(2+) serves as cofactor. In terms of tissue distribution, expressed in root tips, stipules, lateral root primordia, immature anthers and at the branching points of the flowering shoots.

Its subcellular location is the cytoplasm. The enzyme catalyses N-acetyl-alpha-D-glucosamine 1-phosphate + UTP + H(+) = UDP-N-acetyl-alpha-D-glucosamine + diphosphate. The catalysed reaction is N-acetyl-alpha-D-galactosamine 1-phosphate + UTP + H(+) = UDP-N-acetyl-alpha-D-galactosamine + diphosphate. It carries out the reaction alpha-D-glucose 1-phosphate + UTP + H(+) = UDP-alpha-D-glucose + diphosphate. It functions in the pathway nucleotide-sugar biosynthesis; UDP-N-acetyl-alpha-D-glucosamine biosynthesis; UDP-N-acetyl-alpha-D-glucosamine from N-acetyl-alpha-D-glucosamine 1-phosphate: step 1/1. Its function is as follows. Uridylyltransferase involved in the biosynthesis of UDP-glucosamine, an essential precursor for glycoprotein and glycolipid synthesis. Can use UDP-glucosamine, the 4-epimer UDP-galactosamine and UDP-glucose as substrates. Acts redundantly with GLCNAC1PUT1. Required for gametogenesis and embryo development. The chain is UDP-N-acetylglucosamine diphosphorylase 2 (GLCNAC1PUT2) from Arabidopsis thaliana (Mouse-ear cress).